A 336-amino-acid polypeptide reads, in one-letter code: TBC1 domain family member 21 (336 aa).

In terms of domain architecture, Rab-GAP TBC spans Gly57–Lys265.

Interacts with ACTB. Interacts with ARMC12. Interacts with TOMM20 and DNAH7. Interacts with RAP1A. Interacts with RAB10. In terms of tissue distribution, expressed in testis, specifically in elongating and elongated spermatids (at protein level). Expressed in the sperm midpiece (at protein level).

The protein resides in the cytoplasmic vesicle. The protein localises to the secretory vesicle. Its subcellular location is the acrosome. It localises to the cytoplasm. It is found in the cytoskeleton. Acts as a GTPase-activating protein for Rab family protein (s). Essential for the establishment of male fertility, and is required for both the production of normal sperm number and sperm function. Plays an important role in the formation of intact mitochondria, outer dense fibers and axoneme within the sperm tail. Essential for sperm mitochondrial sheath formation and for the interactions of ARMC12 with VDAC2 and VDAC3. May be involved in acrosome formation and cytoskeletal reorganization during spermiogenesis, possibly by regulating RAB3A activity. This Mus musculus (Mouse) protein is TBC1 domain family member 21.